Consider the following 454-residue polypeptide: tRNA modification GTPase MnmE (454 aa).

(6S)-5-formyl-5,6,7,8-tetrahydrofolate-binding residues include Arg-23, Glu-80, and Lys-120. Residues 216–377 form the TrmE-type G domain; it reads GMKVVIAGRP…LRDHLKQSMG (162 aa). K(+) is bound at residue Asn-226. GTP is bound by residues 226–231, 245–251, 270–273, 335–338, and 358–360; these read NAGKSS, TDIAGTT, DTAG, NKAD, and SAR. A Mg(2+)-binding site is contributed by Ser-230. K(+)-binding residues include Thr-245, Ile-247, and Thr-250. Thr-251 serves as a coordination point for Mg(2+). (6S)-5-formyl-5,6,7,8-tetrahydrofolate is bound at residue Lys-454.

This sequence belongs to the TRAFAC class TrmE-Era-EngA-EngB-Septin-like GTPase superfamily. TrmE GTPase family. As to quaternary structure, homodimer. Heterotetramer of two MnmE and two MnmG subunits. Requires K(+) as cofactor.

The protein localises to the cytoplasm. Functionally, exhibits a very high intrinsic GTPase hydrolysis rate. Involved in the addition of a carboxymethylaminomethyl (cmnm) group at the wobble position (U34) of certain tRNAs, forming tRNA-cmnm(5)s(2)U34. The chain is tRNA modification GTPase MnmE from Yersinia pseudotuberculosis serotype O:3 (strain YPIII).